We begin with the raw amino-acid sequence, 604 residues long: Solute carrier family 23 member 1 (604 aa).

The segment at 1 to 29 is disordered; the sequence is MKAQEDPGSSKQHECPDSAGTSTRDQQAP. The Cytoplasmic segment spans residues 1-59; the sequence is MKAQEDPGSSKQHECPDSAGTSTRDQQAPLPAEPKFDMLYKIEDVPPWYLCILLGFQHY. Residues 60-80 traverse the membrane as a helical segment; the sequence is LTCFSGTIAVPFLLAEALCVG. The Extracellular segment spans residues 81 to 88; the sequence is RDQHMISQ. A helical membrane pass occupies residues 89–109; sequence LIGTIFTCVGITTLIQTTVGI. Arginine 110 is a topological domain (cytoplasmic). A helical membrane pass occupies residues 111-131; that stretch reads LPLFQASAFAFLVPAKAILAL. The Extracellular portion of the chain corresponds to 132 to 166; the sequence is ERWKCPPEEEIYGNWSMPLNTSHIWHPRIREVQGA. N-linked (GlcNAc...) asparagine glycosylation is found at asparagine 145 and asparagine 151. A helical membrane pass occupies residues 167–187; the sequence is IMVSSVVEVVIGLLGLPGALL. Residues 188–214 are Cytoplasmic-facing; it reads SYIGPLTVTPTVSLIGLSVFQAAGDRA. A helical transmembrane segment spans residues 215-232; that stretch reads GSHWGISACSILLIVLFS. Residues 233–236 lie on the Extracellular side of the membrane; that stretch reads QYLR. The segment at residues 237–250 is an intramembrane region (helical); the sequence is NLTFLLPVYRWGKG. Residues 251–257 lie on the Extracellular side of the membrane; it reads LTLFRIQ. The chain crosses the membrane as a helical span at residues 258–278; it reads IFKMFPIVLAIMTVWLLCYVL. Residues 279–319 lie on the Cytoplasmic side of the membrane; that stretch reads TLTDVLPADPTVYGFQARTDARGDIMAISPWIRIPYPCQWG. A helical membrane pass occupies residues 320–340; it reads LPTVTVAAVLGMFSATLAGII. The Extracellular portion of the chain corresponds to 341–365; the sequence is ESIGDYYACARLAGAPPPPVHAINR. Residues 366–386 form a helical membrane-spanning segment; that stretch reads GIFTEGVCCIIAGLLGTGNGS. Topologically, residues 387-409 are cytoplasmic; it reads TSSSPNIGVLGITKVGSRRVVQY. A helical membrane pass occupies residues 410–430; the sequence is GAGIMLILGAIGKFTALFASL. Residues 431–433 lie on the Extracellular side of the membrane; that stretch reads PDP. A helical membrane pass occupies residues 434-454; that stretch reads ILGGMFCTLFGMITAVGLSNL. At 455 to 464 the chain is on the cytoplasmic side; that stretch reads QFVDMNSSRN. Residues 465-485 form a helical membrane-spanning segment; that stretch reads LFVLGFSMFFGLTLPNYLDSN. Residues 486–497 are Extracellular-facing; that stretch reads PGAINTGVPEVD. The helical transmembrane segment at 498–518 threads the bilayer; it reads QILTVLLTTEMFVGGCLAFIL. Topologically, residues 519 to 604 are cytoplasmic; sequence DNTVPGSPEE…TETGSVCTKV (86 aa). At threonine 597 the chain carries Phosphothreonine. Residue serine 599 is modified to Phosphoserine. Threonine 602 is subject to Phosphothreonine.

It belongs to the nucleobase:cation symporter-2 (NCS2) (TC 2.A.40) family. In terms of processing, phosphorylated. Highly expressed in the straight segment of proximal tubules in the kidney, in intestine and liver. Detected in epithelial cells of the bronchiole and epididymis.

It localises to the cell membrane. The enzyme catalyses L-ascorbate(out) + 2 Na(+)(out) = L-ascorbate(in) + 2 Na(+)(in). It carries out the reaction urate(out) + 2 Na(+)(out) = urate(in) + 2 Na(+)(in). In terms of biological role, sodium/ascorbate cotransporter. Mediates electrogenic uptake of vitamin C, with a stoichiometry of 2 Na(+) for each ascorbate. Has retained some ancestral activity toward nucleobases such as urate, an oxidized purine. Low-affinity high-capacity sodium:urate cotransporter, may regulate serum urate levels by serving as a renal urate re-absorber. The sequence is that of Solute carrier family 23 member 1 (Slc23a1) from Rattus norvegicus (Rat).